We begin with the raw amino-acid sequence, 403 residues long: Argininosuccinate synthase 1 (403 aa).

ATP is bound by residues 10–18 and Ala-37; that span reads SYSGGLDTS. Tyr-88 and Ser-93 together coordinate L-citrulline. Gly-118 contacts ATP. L-aspartate-binding residues include Thr-120, Asn-124, and Asp-125. Asn-124 is a binding site for L-citrulline. Residues Arg-128, Ser-179, Ser-188, Glu-264, and Tyr-276 each coordinate L-citrulline.

The protein belongs to the argininosuccinate synthase family. Type 1 subfamily. Homotetramer.

It is found in the cytoplasm. The catalysed reaction is L-citrulline + L-aspartate + ATP = 2-(N(omega)-L-arginino)succinate + AMP + diphosphate + H(+). It participates in amino-acid biosynthesis; L-arginine biosynthesis; L-arginine from L-ornithine and carbamoyl phosphate: step 2/3. The chain is Argininosuccinate synthase 1 from Rhizobium johnstonii (strain DSM 114642 / LMG 32736 / 3841) (Rhizobium leguminosarum bv. viciae).